The primary structure comprises 515 residues: NADH-ubiquinone oxidoreductase chain 2 (515 aa).

5 consecutive transmembrane segments (helical) span residues tryptophan 63–serine 83, valine 250–alanine 270, phenylalanine 299–isoleucine 319, alanine 356–cysteine 376, and phenylalanine 379–valine 399.

The protein belongs to the complex I subunit 2 family.

Its subcellular location is the mitochondrion inner membrane. The catalysed reaction is a ubiquinone + NADH + 5 H(+)(in) = a ubiquinol + NAD(+) + 4 H(+)(out). Its function is as follows. Core subunit of the mitochondrial membrane respiratory chain NADH dehydrogenase (Complex I) that is believed to belong to the minimal assembly required for catalysis. Complex I functions in the transfer of electrons from NADH to the respiratory chain. The immediate electron acceptor for the enzyme is believed to be ubiquinone. In Beta vulgaris (Sugar beet), this protein is NADH-ubiquinone oxidoreductase chain 2 (ND2).